The following is a 576-amino-acid chain: Keratin, type II cytoskeletal 5 (576 aa).

Residues 1–163 (MSRQSSVSFR…DPTIQRVRTE (163 aa)) are head. Phosphoserine occurs at positions 5, 8, 16, and 21. Thr-24 is modified (phosphothreonine; by CDK1). Phosphoserine is present on residues Ser-26, Ser-36, Ser-46, Ser-60, Ser-67, Ser-71, Ser-74, and Ser-78. Thr-147 carries the phosphothreonine; by CDK1 modification. Phosphothreonine; by AURKB is present on Thr-162. The interval 164–199 (EREQIKTLNNKFASFIDKVRFLEQQNKVLDTKWTLL) is coil 1A. Positions 164–477 (EREQIKTLNN…KLLEGEECRL (314 aa)) constitute an IF rod domain. The segment at 200 to 218 (QEQGTKTIKQNLDPLFEQY) is linker 1. The interval 219-311 (INNLRRQLDG…FFDAELSQMQ (93 aa)) is coil 1B. The tract at residues 312-334 (THVSDTSVVLSMDNNRSLDLDSI) is linker 12. Positions 335 to 473 (IAEVKAQYED…ATYRKLLEGE (139 aa)) are coil 2. Residues 474–576 (ECRLSGEGVG…TSSSRRSFKS (103 aa)) form a tail region. Position 527 is an omega-N-methylarginine (Arg-527). Positions 540 to 557 (GFSASSGQGGGFSSGGGS) are enriched in gly residues. The disordered stretch occupies residues 540-576 (GFSASSGQGGGFSSGGGSSSSVKFVSTTSSSRRSFKS). A compositionally biased stretch (low complexity) spans 558-576 (SSSVKFVSTTSSSRRSFKS).

The protein belongs to the intermediate filament family. As to quaternary structure, heterodimer of a type I and a type II keratin. Heterodimer with type I keratin KRT25 leading to the formation of keratin intermediate filament (KIF) network. Forms a heterodimer (via 2B domains) with KRT14 (via 2B domains). Interacts with TCHP. Interacts with EPPK1. Interacts with AMELX. Interacts with PKP1 (via N-terminus) and PKP2. In terms of processing, phosphorylated by CDK1, AURKB and Rho-kinase, phosphorylation is regulated by the cell cycle. Thr-24 phosphorylation, mediated by CDK1, peaks during prometaphase or metaphase cells with phosphorylated filamentous structures evident throughout the cytoplasm during early mitosis. CDK1 phosphorylates Thr-24 in mitotic cells at the site of injury. Post-translationally, O-glycosylated. As to expression, expressed in the epidermis (at protein level) and testis (within pachytene spermatocytes).

It is found in the cytoplasm. Functionally, required for the formation of keratin intermediate filaments in the basal epidermis and maintenance of the skin barrier in response to mechanical stress. Regulates the recruitment of Langerhans cells to the epidermis, potentially by modulation of the abundance of macrophage chemotactic cytokines, macrophage inflammatory cytokines and CTNND1 localization in keratinocytes. This chain is Keratin, type II cytoskeletal 5, found in Rattus norvegicus (Rat).